We begin with the raw amino-acid sequence, 266 residues long: Undecaprenyl-diphosphatase (266 aa).

8 helical membrane passes run 1–21 (MEFF…FIPI), 39–59 (PGSS…FWYF), 87–107 (IFIG…FVPG), 117–137 (LSIA…DIST), 153–173 (YIGI…GATI), 189–209 (FSFL…FFSA), 216–236 (FPFL…LLAI), and 246–266 (HGLK…LFNL).

This sequence belongs to the UppP family.

The protein resides in the cell inner membrane. It catalyses the reaction di-trans,octa-cis-undecaprenyl diphosphate + H2O = di-trans,octa-cis-undecaprenyl phosphate + phosphate + H(+). Functionally, catalyzes the dephosphorylation of undecaprenyl diphosphate (UPP). Confers resistance to bacitracin. The sequence is that of Undecaprenyl-diphosphatase from Prochlorococcus marinus subsp. pastoris (strain CCMP1986 / NIES-2087 / MED4).